A 258-amino-acid chain; its full sequence is Ubiquinone/menaquinone biosynthesis C-methyltransferase UbiE (258 aa).

S-adenosyl-L-methionine-binding positions include Thr-81, Asp-102, and 130–131 (NA).

Belongs to the class I-like SAM-binding methyltransferase superfamily. MenG/UbiE family.

It carries out the reaction a 2-demethylmenaquinol + S-adenosyl-L-methionine = a menaquinol + S-adenosyl-L-homocysteine + H(+). The enzyme catalyses a 2-methoxy-6-(all-trans-polyprenyl)benzene-1,4-diol + S-adenosyl-L-methionine = a 5-methoxy-2-methyl-3-(all-trans-polyprenyl)benzene-1,4-diol + S-adenosyl-L-homocysteine + H(+). It participates in quinol/quinone metabolism; menaquinone biosynthesis; menaquinol from 1,4-dihydroxy-2-naphthoate: step 2/2. The protein operates within cofactor biosynthesis; ubiquinone biosynthesis. In terms of biological role, methyltransferase required for the conversion of demethylmenaquinol (DMKH2) to menaquinol (MKH2) and the conversion of 2-polyprenyl-6-methoxy-1,4-benzoquinol (DDMQH2) to 2-polyprenyl-3-methyl-6-methoxy-1,4-benzoquinol (DMQH2). The polypeptide is Ubiquinone/menaquinone biosynthesis C-methyltransferase UbiE (Rhizobium meliloti (strain 1021) (Ensifer meliloti)).